Reading from the N-terminus, the 461-residue chain is Cysteine--tRNA ligase (461 aa).

C29 contributes to the Zn(2+) binding site. The 'HIGH' region signature appears at 31–41 (MTIYDLCHVGH). Zn(2+) contacts are provided by C213, H238, and E242. Residues 274–278 (KMSKS) carry the 'KMSKS' region motif. K277 provides a ligand contact to ATP.

This sequence belongs to the class-I aminoacyl-tRNA synthetase family. Monomer. Requires Zn(2+) as cofactor.

The protein localises to the cytoplasm. It carries out the reaction tRNA(Cys) + L-cysteine + ATP = L-cysteinyl-tRNA(Cys) + AMP + diphosphate. This Methylibium petroleiphilum (strain ATCC BAA-1232 / LMG 22953 / PM1) protein is Cysteine--tRNA ligase.